Consider the following 300-residue polypeptide: Taste receptor type 2 member 105 (300 aa).

Residues 1-7 (MLSAAEG) lie on the Extracellular side of the membrane. The chain crosses the membrane as a helical span at residues 8–28 (ILLSIATVEAGLGVLGNTFIA). Topologically, residues 29-43 (LVNCMDWAKNNKLSM) are cytoplasmic. A helical transmembrane segment spans residues 44-64 (TGFLLIGLATSRIFIVWLLTL). Residues 65-87 (DAYAKLFYPSKYFSSSLIEIISY) are Extracellular-facing. A helical transmembrane segment spans residues 88–108 (IWMTVNHLTVWFATSLSIFYF). Residues 109–128 (LKIANFSDCVFLWLKRRTDK) are Cytoplasmic-facing. A helical membrane pass occupies residues 129–149 (AFVFLLGCLLTSWVISFSFVV). Topologically, residues 150–181 (KVMKDGKVNHRNRTSEMYWEKRQFTINYVFLN) are extracellular. N-linked (GlcNAc...) asparagine glycosylation is present at Asn161. Residues 182–202 (IGVISLFMMTLTACFLLIMSL) traverse the membrane as a helical segment. The Cytoplasmic portion of the chain corresponds to 203-233 (WRHSRQMQSGVSGFRDLNTEAHVKAIKFLIS). A helical transmembrane segment spans residues 234–254 (FIILFVLYFIGVSIEIICIFI). The Extracellular segment spans residues 255–259 (PENKL). A helical membrane pass occupies residues 260–280 (LFIFGFTTASIYPCCHSFILI). Residues 281 to 300 (LSNSQLKQAFVKVLQGLKFF) are Cytoplasmic-facing.

The protein belongs to the G-protein coupled receptor T2R family. As to expression, expressed in subsets of taste receptor cells of the tongue and palate epithelium and exclusively in gustducin-positive cells. Expressed in gastric and duodenal tissues.

The protein resides in the membrane. In terms of biological role, gustducin-coupled cycloheximide receptor implicated in the perception of bitter compounds in the oral cavity and the gastrointestinal tract. Signals through PLCB2 and the calcium-regulated cation channel TRPM5. The sequence is that of Taste receptor type 2 member 105 (Tas2r105) from Mus musculus (Mouse).